A 199-amino-acid chain; its full sequence is Recombination protein RecR (199 aa).

Residues 56–71 (CATCGNVAQEEQCNIC) form a C4-type zinc finger. The 96-residue stretch at 79 to 174 (SVICVVEEPK…KVTRLASGLP (96 aa)) folds into the Toprim domain.

Belongs to the RecR family.

In terms of biological role, may play a role in DNA repair. It seems to be involved in an RecBC-independent recombinational process of DNA repair. It may act with RecF and RecO. The protein is Recombination protein RecR of Streptomyces coelicolor (strain ATCC BAA-471 / A3(2) / M145).